A 245-amino-acid polypeptide reads, in one-letter code: Keratin-associated protein 10-12 (245 aa).

19 consecutive repeat copies span residues 36-40, 41-45, 62-66, 84-88, 94-98, 104-108, 109-113, 114-118, 119-123, 124-128, 131-135, 141-145, 151-155, 156-160, 161-165, 173-177, 183-187, 188-192, and 214-218. The segment at 36–218 is 19 X 5 AA repeats of C-C-X(3); it reads CCEPPCCAPA…VPVPSCCVPT (183 aa).

The protein belongs to the KRTAP type 10 family. In terms of assembly, interacts with hair keratins. In terms of tissue distribution, restricted to a narrow region of the hair fiber cuticle, lying approximately 20 cell layers above the apex of the dermal papilla of the hair root; not detected in any other tissues.

Functionally, in the hair cortex, hair keratin intermediate filaments are embedded in an interfilamentous matrix, consisting of hair keratin-associated proteins (KRTAP), which are essential for the formation of a rigid and resistant hair shaft through their extensive disulfide bond cross-linking with abundant cysteine residues of hair keratins. The matrix proteins include the high-sulfur and high-glycine-tyrosine keratins. The polypeptide is Keratin-associated protein 10-12 (KRTAP10-12) (Homo sapiens (Human)).